The following is a 579-amino-acid chain: DELLA protein GAIP (579 aa).

The disordered stretch occupies residues 1–25; it reads MKREHHYLHPRPEPPSVATGSNRES. A DELLA motif motif is present at residues 46 to 50; that stretch reads DELLA. Residues 202–570 enclose the GRAS domain; that stretch reads VDSQENGIQL…RPLIATSAWK (369 aa). Residues 209–263 are leucine repeat I (LRI); it reads IQLVHALMVCAEAVQQNNLNLAEALVKRIDYLAVSQAGAMRKVATFFAEALARRI. A VHIID region spans residues 281–346; it reads QMHFYESCPY…SGPPTFRLTG (66 aa). The short motif at 312–316 is the VHIID element; that stretch reads VHVID. Residues 360 to 392 are leucine repeat II (LRII); that stretch reads DVGWKLVKFAETLHVEFEYRGFVANSLADLDAS. Residues 404 to 491 are PFYRE; sequence VVVNSVFELH…EMYLGKQICN (88 aa). The short motif at 412–416 is the LXXLL motif element; sequence LHQLL. The tract at residues 494-570 is SAW; that stretch reads ACEGADRVER…RPLIATSAWK (77 aa).

It belongs to the GRAS family. DELLA subfamily. Phosphorylated. In terms of processing, ubiquitinated. Upon GA application it is ubiquitinated, leading to its subsequent degradation.

It localises to the nucleus. Its function is as follows. Probable transcriptional regulator that acts as a repressor of the gibberellin (GA) signaling pathway. Probably acts by participating in large multiprotein complexes that represses transcription of GA-inducible genes. Upon GA application, it is degraded by the proteasome, allowing the GA signaling pathway. In Cucurbita maxima (Pumpkin), this protein is DELLA protein GAIP (GAIP).